A 785-amino-acid chain; its full sequence is MADFDSPPKLSGVQPPSEGVGGGRCSEISAELIRSLTELQELETVYERLCGEEKVVERELDALLEQQNTIESKMVTLHRMGPNLQLIEGDAKQLAGMITFTCNLAENVSSKVRQLDLAKNRLYQAIQRADDILDLKFCMDGVQTALRNEDYEQAAAHIHRYLCLDKSVIELSRQGKEGSMIDANLKLLQEAEQRLKAIVAEKFAVATKEGDLPQVERFFKIFPLLGLHEEGLRKFSEYLCKQVASKAEENLLMVLGTDMSDRRAAVIFADTLTLLFEGIARIVETHQPIVETYYGPGRLYTLIKYLQVECDRQVEKVVDKFIKQRDYHQQFRHVQNNLMRNSTTEKIEPRELDPILTEVTLMNARSELYLRFLKKRISSDFEVGDSMASEEVKQEHQKCLDKLLNNCLLSCTMQELIGLYVTMEEYFMRETVNKAVALDTYEKGQLTSSMVDDVFYIVKKCIGRALSSSSIDCLCAMINLATTELESDFRDVLCNKLRMGFPATTFQDIQRGVTSAVNIMHSSLQQGKFDTKGIESTDEAKMSFLVTLNNVEVCSENISTLKKTLESDCTKLFSQGIGGEQAQAKFDSCLSDLAAVSNKFRDLLQEGLTELNSTAIKPQVQPWINSFFSVSHNIEEEEFNDYEANDPWVQQFILNLEQQMAEFKASLSPVIYDSLTGLMTSLVTVELEKVVLKSTFNRLGGLQFDKELRSLIAYLTTVTTWTIRDKFARLSQMATILNLERVTEILDYWGPNSGPLTWRLTPAEVRQVLALRIDFRSEDIKRLRL.

Positions 1-24 (MADFDSPPKLSGVQPPSEGVGGGR) are disordered. Ala2 is modified (N-acetylalanine). Positions 2 to 84 (ADFDSPPKLS…VTLHRMGPNL (83 aa)) are interaction with SCFD1. Ser6 bears the Phosphoserine mark. Residues 85–153 (QLIEGDAKQL…TALRNEDYEQ (69 aa)) are interaction with STX5. The interval 618-740 (PQVQPWINSF…SQMATILNLE (123 aa)) is d domain. The tract at residues 741-785 (RVTEILDYWGPNSGPLTWRLTPAEVRQVLALRIDFRSEDIKRLRL) is e domain; essential for proper cell surface glycosylation.

It belongs to the COG4 family. Monomer. Component of the conserved oligomeric Golgi (COG) complex which is composed of eight different subunits and is required for normal Golgi morphology and localization. Mediates interaction of SCFD1 with the COG complex. Interacts with STX5.

It localises to the cytoplasm. The protein localises to the cytosol. The protein resides in the golgi apparatus membrane. Required for normal Golgi function. Plays a role in SNARE-pin assembly and Golgi-to-ER retrograde transport via its interaction with SCFD1. The protein is Conserved oligomeric Golgi complex subunit 4 (COG4) of Pongo abelii (Sumatran orangutan).